The following is a 74-amino-acid chain: Small ribosomal subunit protein bS18 (74 aa).

It belongs to the bacterial ribosomal protein bS18 family. In terms of assembly, part of the 30S ribosomal subunit. Forms a tight heterodimer with protein bS6.

Binds as a heterodimer with protein bS6 to the central domain of the 16S rRNA, where it helps stabilize the platform of the 30S subunit. In Thioalkalivibrio sulfidiphilus (strain HL-EbGR7), this protein is Small ribosomal subunit protein bS18.